The sequence spans 170 residues: CFA/I fimbrial subunit B (170 aa).

An N-terminal signal peptide occupies residues 1–23; it reads MKFKKTIGAMALTTMFVAVSASA.

The protein belongs to the fimbrial CS1 protein family. In terms of assembly, CFA/I fimbriae are rather rigid, thread-like filaments of 0.5-1 micrometer, with an apparent axial hole, and a diameter of 7 nanometers. A single CFA/I fimbria consists of about 100 identical protein subunits.

The protein localises to the fimbrium. Functionally, fimbriae (also called pili), polar filaments radiating from the surface of the bacterium to a length of 0.5-1.5 micrometers and numbering 100-300 per cell, enable bacteria to colonize the epithelium of specific host organs. In Escherichia coli O78:H11 (strain H10407 / ETEC), this protein is CFA/I fimbrial subunit B (cfaB).